Consider the following 280-residue polypeptide: Shikimate dehydrogenase (NADP(+)) (280 aa).

Shikimate is bound by residues 23 to 25 (SLS) and T70. K74 acts as the Proton acceptor in catalysis. 2 residues coordinate shikimate: N95 and D111. NADP(+) is bound by residues 135 to 139 (GSGGA), 158 to 163 (NRTISK), and I221. Position 223 (Y223) interacts with shikimate. NADP(+) is bound at residue G247.

Belongs to the shikimate dehydrogenase family. As to quaternary structure, homodimer.

It catalyses the reaction shikimate + NADP(+) = 3-dehydroshikimate + NADPH + H(+). It functions in the pathway metabolic intermediate biosynthesis; chorismate biosynthesis; chorismate from D-erythrose 4-phosphate and phosphoenolpyruvate: step 4/7. In terms of biological role, involved in the biosynthesis of the chorismate, which leads to the biosynthesis of aromatic amino acids. Catalyzes the reversible NADPH linked reduction of 3-dehydroshikimate (DHSA) to yield shikimate (SA). This Buchnera aphidicola subsp. Cinara cedri (strain Cc) protein is Shikimate dehydrogenase (NADP(+)).